The chain runs to 220 residues: Splicing factor U2AF 26 kDa subunit (220 aa).

A2 bears the N-acetylalanine mark. The C3H1-type 1 zinc finger occupies 12–40 (EKDKVNCSFYFKIGVCRHGDRCSRLHNKP). One can recognise an RRM domain in the interval 65–147 (SHCHVSDVEV…QAVHGELSPV (83 aa)). The C3H1-type 2 zinc finger occupies 149 to 176 (DFRESCCRQYEMGECTRGGFCNFMHLRP). The tract at residues 185 to 220 (LYGRGPRRRSPPRFHTGHHPRERNHRCSPDHWHGRF) is disordered. Over residues 189-208 (GPRRRSPPRFHTGHHPRERN) the composition is skewed to basic residues. Basic and acidic residues predominate over residues 209-220 (HRCSPDHWHGRF).

This sequence belongs to the splicing factor SR family. As to quaternary structure, interacts with GFI1, U2AF2 and C1QBP. In terms of tissue distribution, isoform 2 is widely expressed. Isoform 3 is highly expressed in heart, brain and lung, lower expressed in thymus and much lower expressed in peripheral blood leukocytes.

Its subcellular location is the nucleus. It localises to the nucleus speckle. The protein localises to the cytoplasm. Functionally, RNA-binding protein that function as a pre-mRNA splicing factor. Plays a critical role in both constitutive and enhancer-dependent splicing by mediating protein-protein interactions and protein-RNA interactions required for accurate 3'-splice site selection. Acts by enhancing the binding of U2AF2 to weak pyrimidine tracts. Also participates in the regulation of alternative pre-mRNA splicing. Activates exon 5 skipping of PTPRC during T-cell activation; an event reversed by GFI1. Binds to RNA at the AG dinucleotide at the 3'-splice site. Shows a preference for AGC or AGA. This Homo sapiens (Human) protein is Splicing factor U2AF 26 kDa subunit (U2AF1L4).